Here is a 153-residue protein sequence, read N- to C-terminus: SsrA-binding protein (153 aa).

The protein belongs to the SmpB family.

Its subcellular location is the cytoplasm. Its function is as follows. Required for rescue of stalled ribosomes mediated by trans-translation. Binds to transfer-messenger RNA (tmRNA), required for stable association of tmRNA with ribosomes. tmRNA and SmpB together mimic tRNA shape, replacing the anticodon stem-loop with SmpB. tmRNA is encoded by the ssrA gene; the 2 termini fold to resemble tRNA(Ala) and it encodes a 'tag peptide', a short internal open reading frame. During trans-translation Ala-aminoacylated tmRNA acts like a tRNA, entering the A-site of stalled ribosomes, displacing the stalled mRNA. The ribosome then switches to translate the ORF on the tmRNA; the nascent peptide is terminated with the 'tag peptide' encoded by the tmRNA and targeted for degradation. The ribosome is freed to recommence translation, which seems to be the essential function of trans-translation. The polypeptide is SsrA-binding protein (Paramagnetospirillum magneticum (strain ATCC 700264 / AMB-1) (Magnetospirillum magneticum)).